A 316-amino-acid chain; its full sequence is Acetaldehyde dehydrogenase (316 aa).

Residue 11–14 (SGNI) participates in NAD(+) binding. C131 (acyl-thioester intermediate) is an active-site residue. NAD(+) contacts are provided by residues 162 to 170 (SAGPGTRAN) and N289.

The protein belongs to the acetaldehyde dehydrogenase family. In terms of assembly, interacts with MhpE.

The catalysed reaction is acetaldehyde + NAD(+) + CoA = acetyl-CoA + NADH + H(+). It participates in aromatic compound metabolism; 3-phenylpropanoate degradation. Catalyzes the conversion of acetaldehyde to acetyl-CoA, using NAD(+) and coenzyme A. Is the final enzyme in the meta-cleavage pathway for the degradation of aromatic compounds. This is Acetaldehyde dehydrogenase from Shigella sonnei (strain Ss046).